The primary structure comprises 304 residues: Nicotinamide/nicotinic acid mononucleotide adenylyltransferase 2 (304 aa).

Residues Ser16 and Phe17 each coordinate NAD(+). ATP is bound at residue His24. NAD(+) is bound by residues Trp92 and Thr95. S-palmitoyl cysteine attachment occurs at residues Cys161 and Cys162. The NAD(+) site is built by Gly197, Asp199, Leu209, Trp210, and Arg229. 268–271 lines the ATP pocket; sequence TKSR.

This sequence belongs to the eukaryotic NMN adenylyltransferase family. As to quaternary structure, monomer. It depends on Mg(2+) as a cofactor.

The protein localises to the golgi apparatus membrane. It is found in the cytoplasmic vesicle membrane. It localises to the cytoplasm. Its subcellular location is the cell projection. The protein resides in the axon. The catalysed reaction is beta-nicotinamide D-ribonucleotide + ATP + H(+) = diphosphate + NAD(+). The enzyme catalyses nicotinate beta-D-ribonucleotide + ATP + H(+) = deamido-NAD(+) + diphosphate. Its pathway is cofactor biosynthesis; NAD(+) biosynthesis; NAD(+) from nicotinamide D-ribonucleotide: step 1/1. It participates in cofactor biosynthesis; NAD(+) biosynthesis; deamido-NAD(+) from nicotinate D-ribonucleotide: step 1/1. Nicotinamide/nicotinate-nucleotide adenylyltransferase that acts as an axon maintenance factor. Axon survival factor required for the maintenance of healthy axons: acts by delaying Wallerian axon degeneration, an evolutionarily conserved process that drives the loss of damaged axons. Catalyzes the formation of NAD(+) from nicotinamide mononucleotide (NMN) and ATP. Can also use the deamidated form; nicotinic acid mononucleotide (NaMN) as substrate but with a lower efficiency. Also catalyzes the reverse reaction, i.e. the pyrophosphorolytic cleavage of NAD(+). For the pyrophosphorolytic activity prefers NAD(+), NADH and NaAD as substrates and degrades nicotinic acid adenine dinucleotide phosphate (NHD) less effectively. Also acts as an activator of ADP-ribosylation by supporting the catalytic activity of PARP16 and promoting mono-ADP-ribosylation of ribosomes by PARP16. May be involved in the maintenance of axonal integrity. In Danio rerio (Zebrafish), this protein is Nicotinamide/nicotinic acid mononucleotide adenylyltransferase 2 (nmnat2).